The sequence spans 506 residues: Anaerobic nitric oxide reductase transcription regulator NorR (506 aa).

A 4-aspartylphosphate modification is found at D57. Positions 187–416 (MIGLSPAMTQ…LEHAIHRAVV (230 aa)) constitute a Sigma-54 factor interaction domain. ATP contacts are provided by residues 215 to 222 (GETGTGKE) and 278 to 287 (ADNGTLFLDE). The H-T-H motif DNA-binding region spans 481–500 (WAASARALETDVANLHRLAK).

It participates in nitrogen metabolism; nitric oxide reduction. Required for the expression of anaerobic nitric oxide (NO) reductase, acts as a transcriptional activator for at least the norVW operon. Activation also requires sigma-54. In Salmonella choleraesuis (strain SC-B67), this protein is Anaerobic nitric oxide reductase transcription regulator NorR.